A 166-amino-acid polypeptide reads, in one-letter code: Large ribosomal subunit protein uL10 (166 aa).

Belongs to the universal ribosomal protein uL10 family. As to quaternary structure, part of the ribosomal stalk of the 50S ribosomal subunit. The N-terminus interacts with L11 and the large rRNA to form the base of the stalk. The C-terminus forms an elongated spine to which L12 dimers bind in a sequential fashion forming a multimeric L10(L12)X complex.

Functionally, forms part of the ribosomal stalk, playing a central role in the interaction of the ribosome with GTP-bound translation factors. In Bacillus velezensis (strain DSM 23117 / BGSC 10A6 / LMG 26770 / FZB42) (Bacillus amyloliquefaciens subsp. plantarum), this protein is Large ribosomal subunit protein uL10.